A 307-amino-acid chain; its full sequence is HPr kinase/phosphorylase (307 aa).

Active-site residues include His136 and Lys157. An ATP-binding site is contributed by 151 to 158; sequence GESGIGKS. Ser158 is a binding site for Mg(2+). The Proton acceptor; for phosphorylation activity. Proton donor; for dephosphorylation activity role is filled by Asp175. Residues 198 to 207 are important for the catalytic mechanism of both phosphorylation and dephosphorylation; the sequence is LEVRGMGIID. Glu199 serves as a coordination point for Mg(2+). Arg240 is an active-site residue. The tract at residues 261 to 266 is important for the catalytic mechanism of dephosphorylation; sequence PIRPGR.

The protein belongs to the HPrK/P family. In terms of assembly, homohexamer. Mg(2+) serves as cofactor.

The catalysed reaction is [HPr protein]-L-serine + ATP = [HPr protein]-O-phospho-L-serine + ADP + H(+). The enzyme catalyses [HPr protein]-O-phospho-L-serine + phosphate + H(+) = [HPr protein]-L-serine + diphosphate. Functionally, catalyzes the ATP- as well as the pyrophosphate-dependent phosphorylation of a specific serine residue in HPr, a phosphocarrier protein of the phosphoenolpyruvate-dependent sugar phosphotransferase system (PTS). HprK/P also catalyzes the pyrophosphate-producing, inorganic phosphate-dependent dephosphorylation (phosphorolysis) of seryl-phosphorylated HPr (P-Ser-HPr). The two antagonistic activities of HprK/P are regulated by several intracellular metabolites, which change their concentration in response to the absence or presence of rapidly metabolisable carbon sources (glucose, fructose, etc.) in the growth medium. Therefore, by controlling the phosphorylation state of HPr, HPrK/P is a sensor enzyme that plays a major role in the regulation of carbon metabolism and sugar transport: it mediates carbon catabolite repression (CCR), and regulates PTS-catalyzed carbohydrate uptake and inducer exclusion. In Clostridium novyi (strain NT), this protein is HPr kinase/phosphorylase.